We begin with the raw amino-acid sequence, 156 residues long: Small ribosomal subunit protein uS7 (156 aa).

Belongs to the universal ribosomal protein uS7 family. As to quaternary structure, part of the 30S ribosomal subunit. Contacts proteins S9 and S11.

In terms of biological role, one of the primary rRNA binding proteins, it binds directly to 16S rRNA where it nucleates assembly of the head domain of the 30S subunit. Is located at the subunit interface close to the decoding center, probably blocks exit of the E-site tRNA. The polypeptide is Small ribosomal subunit protein uS7 (Hamiltonella defensa subsp. Acyrthosiphon pisum (strain 5AT)).